A 210-amino-acid polypeptide reads, in one-letter code: Cell division protein FtsQ (210 aa).

The region spanning 1–58 (LQTSEIEVFQLLGLDGSTSLIALDIDAARRKLVQLPWVEDVDIRKVYPKTVEVRLKER) is the POTRA domain. A helical membrane pass occupies residues 8 to 25 (VFQLLGLDGSTSLIALDI).

The protein belongs to the FtsQ/DivIB family. FtsQ subfamily.

The protein resides in the cell inner membrane. Functionally, essential cell division protein. This Rhizobium radiobacter (Agrobacterium tumefaciens) protein is Cell division protein FtsQ.